The chain runs to 152 residues: Transcriptional regulator MraZ (152 aa).

2 consecutive SpoVT-AbrB domains span residues 5–52 (ATLV…PLPE) and 81–124 (ASEC…DETT).

Belongs to the MraZ family. Forms oligomers.

Its subcellular location is the cytoplasm. It localises to the nucleoid. Its function is as follows. Negatively regulates its own expression and that of the subsequent genes in the proximal part of the division and cell wall (dcw) gene cluster. Acts by binding directly to DNA. May also regulate the expression of genes outside the dcw cluster. The protein is Transcriptional regulator MraZ of Shigella sonnei (strain Ss046).